The sequence spans 640 residues: Acid beta-fructofuranosidase 2, vacuolar (640 aa).

The disordered stretch occupies residues 1 to 22 (MDTNTTSYTPLPGDPFLSGPPE). At 1 to 29 (MDTNTTSYTPLPGDPFLSGPPETPRRPLK) the chain is on the cytoplasmic side. Positions 1 to 78 (MDTNTTSYTP…HPQSTTNTML (78 aa)) are cleaved as a propeptide — removed in mature form. The chain crosses the membrane as a helical span at residues 30–49 (GFAVIFASVIFLMSLVALII). At 50 to 616 (HQGPQQPPDV…FSPDAASHSS (567 aa)) the chain is on the lumenal side. Substrate is bound by residues 93-96 (WMND), Gln112, Trp120, 155-156 (WT), 219-220 (RD), Glu274, and Asp307. Asp96 is a catalytic residue. A disulfide bond links Cys464 and Cys512. A helical membrane pass occupies residues 617–639 (FTPVTVFIKFIVPFGIFLTLYFV). Position 640 (Arg640) is a topological domain, cytoplasmic.

Belongs to the glycosyl hydrolase 32 family. In terms of tissue distribution, expressed in buds, stems, roots and leaves.

It localises to the membrane. It is found in the vacuole membrane. The catalysed reaction is Hydrolysis of terminal non-reducing beta-D-fructofuranoside residues in beta-D-fructofuranosides.. Vacuolar invertase. In Rosa hybrid cultivar, this protein is Acid beta-fructofuranosidase 2, vacuolar.